We begin with the raw amino-acid sequence, 245 residues long: Demethylmenaquinone methyltransferase (245 aa).

S-adenosyl-L-methionine is bound by residues threonine 58, aspartate 79, and 106 to 107 (NA).

This sequence belongs to the class I-like SAM-binding methyltransferase superfamily. MenG/UbiE family.

It carries out the reaction a 2-demethylmenaquinol + S-adenosyl-L-methionine = a menaquinol + S-adenosyl-L-homocysteine + H(+). It functions in the pathway quinol/quinone metabolism; menaquinone biosynthesis; menaquinol from 1,4-dihydroxy-2-naphthoate: step 2/2. Functionally, methyltransferase required for the conversion of demethylmenaquinol (DMKH2) to menaquinol (MKH2). The sequence is that of Demethylmenaquinone methyltransferase from Halalkalibacterium halodurans (strain ATCC BAA-125 / DSM 18197 / FERM 7344 / JCM 9153 / C-125) (Bacillus halodurans).